Reading from the N-terminus, the 201-residue chain is Bradykinin potentiating and C-type natriuretic peptides (201 aa).

Residues 1-23 form the signal peptide; that stretch reads MFVSRLAASGLLLLALLAVSLDG. A propeptide spanning residues 24-47 is cleaved from the precursor; that stretch reads KPVQQWSQNWPGPKVPPLVVQQWS. Position 48 is a pyrrolidone carboxylic acid (glutamine 48). Residues 58-60 constitute a propeptide that is removed on maturation; that stretch reads LVV. Position 61 is a pyrrolidone carboxylic acid (glutamine 61). 2 propeptides span residues 67–95 and 107–179; these read TQLQ…AALD and GSKA…LAKK. The disordered stretch occupies residues 90–172; the sequence is PDAALDTPPA…GGGGGGGARR (83 aa). A compositionally biased stretch (low complexity) spans 120–130; that stretch reads SKGASATSTAS. Positions 132–142 are enriched in basic and acidic residues; that stretch reads PMRDLRTDGKQ. The span at 159–170 shows a compositional bias: gly residues; the sequence is PGGGGGGGGGGA. A disulfide bridge links cysteine 185 with cysteine 201.

It in the N-terminal section; belongs to the bradykinin-potentiating peptide family. In the central section; belongs to the bradykinin inhibitor peptide family. This sequence in the C-terminal section; belongs to the natriuretic peptide family. In terms of tissue distribution, venom gland.

Its subcellular location is the secreted. Its function is as follows. Inhibits the activity of the angiotensin-converting enzyme (ACE) by a preferential interaction with its C-domain. May also potentiate the hypotensive effects of bradykinin. Antagonizes the vasodilatory actions of bradykinin at the B2 bradykinin receptor. Functionally, has a vasorelaxant activity in rat aortic strips and a diuretic potency in anesthetized rats. May act by activating natriuretic receptors (NPR1 and/or NPR2). In Sistrurus catenatus edwardsii (Desert massasauga), this protein is Bradykinin potentiating and C-type natriuretic peptides.